Reading from the N-terminus, the 550-residue chain is Solute carrier family 22 member 11 (550 aa).

Over 1 to 10 (MAFSKLLEQA) the chain is Cytoplasmic. The chain crosses the membrane as a helical span at residues 11-31 (GGVGLFQTLQVLTFILPCLMI). The Extracellular segment spans residues 32-142 (PSQMLLENFS…DLVCSSQGLK (111 aa)). N-linked (GlcNAc...) asparagine glycosylation is found at Asn-39, Asn-56, and Asn-99. The helical transmembrane segment at 143 to 163 (PLSQSIFMSGILVGSFIWGLL) threads the bilayer. Topologically, residues 164–174 (SYRFGRKPMLS) are cytoplasmic. The chain crosses the membrane as a helical span at residues 175-195 (WCCLQLAVAGTSTIFAPTFVI). Residues 196–200 (YCGLR) are Extracellular-facing. A helical transmembrane segment spans residues 201-221 (FVAAFGMAGIFLSSLTLMVEW). At 222 to 231 (TTTSRRAVTM) the chain is on the cytoplasmic side. The chain crosses the membrane as a helical span at residues 232-252 (TVVGCAFSAGQAALGGLAFAL). Over 253–256 (RDWR) the chain is Extracellular. A helical membrane pass occupies residues 257 to 277 (TLQLAASVPFFAISLISWWLP). The Cytoplasmic segment spans residues 278 to 346 (ESARWLIIKG…FCVPVLRWRS (69 aa)). The helical transmembrane segment at 347–367 (CAMLVVNFSLLISYYGLVFDL) threads the bilayer. Residues 368–378 (QSLGRDIFLLQ) lie on the Extracellular side of the membrane. Residues 379–399 (ALFGAVDFLGRATTALLLSFL) form a helical membrane-spanning segment. The Cytoplasmic segment spans residues 400 to 402 (GRR). A helical transmembrane segment spans residues 403–423 (TIQAGSQAMAGLAILANMLVP). Topologically, residues 424–430 (QDLQTLR) are extracellular. A helical membrane pass occupies residues 431 to 451 (VVFAVLGKGCFGISLTCLTIY). At 452-463 (KAELFPTPVRMT) the chain is on the cytoplasmic side. The chain crosses the membrane as a helical span at residues 464-484 (ADGILHTVGRLGAMMGPLILM). Topologically, residues 485–490 (SRQALP) are extracellular. The helical transmembrane segment at 491-511 (LLPPLLYGVISIASSLVVLFF) threads the bilayer. Topologically, residues 512–550 (LPETQGLPLPDTIQDLESQKSTAAQGNRQEAVTVESTSL) are cytoplasmic. A disordered region spans residues 531 to 550 (KSTAAQGNRQEAVTVESTSL).

This sequence belongs to the major facilitator (TC 2.A.1) superfamily. Organic cation transporter (TC 2.A.1.19) family. In terms of processing, N-glycosylated. Contains several complex-type N-glycans. In terms of tissue distribution, expressed in placental trophoblasts, syncytiotrophoblast and cytotrophoblast. Also located in the proximal tubules in kidneys.

It is found in the cell membrane. It localises to the apical cell membrane. Its subcellular location is the basal cell membrane. The enzyme catalyses estrone 3-sulfate(out) + glutarate(in) = estrone 3-sulfate(in) + glutarate(out). The catalysed reaction is dehydroepiandrosterone 3-sulfate(out) = dehydroepiandrosterone 3-sulfate(in). It catalyses the reaction prostaglandin F2alpha(out) = prostaglandin F2alpha(in). It carries out the reaction prostaglandin E2(out) = prostaglandin E2(in). Functionally, antiporter that mediates the transport of conjugated steroids and other specific organic anions at the basal membrane of syncytiotrophoblast and at the apical membrane of proximal tubule epithelial cells, in exchange for anionic compounds. May be responsible for placental absorption of fetal-derived steroid sulfates such as estrone sulfate (E1S) and the steroid hormone precursor dehydroepiandrosterone sulfate (DHEA-S), as well as clearing waste products and xenobiotics from the fetus. Maybe also be involved in placental urate homeostasis. Facilitates the renal reabsorption of organic anions such as urate and derived steroid sulfates. Organic anion glutarate acts as conteranion for E1S renal uptake. Possible transport mode may also include DHEA-S/E1S exchange. Also interacts with inorganic anions such as chloride and hydroxyl ions, therefore possible transport modes may include E1S/Cl(-), E1S/OH(-), urate/Cl(-) and urate/OH(-). Also mediates the transport of prostaglandin E2 (PGE2) and prostaglandin F2-alpha (PGF2-alpha) and may be involved in their renal excretion. Also able to uptake anionic drugs, diuretics, bile salts and ochratoxin A. Mediates the unidirectional efflux of glutamate and aspartate. Glutamate efflux down its transmembrane gradient may drive SLC22A11/OAT4-mediated placental uptake of E1S. The sequence is that of Solute carrier family 22 member 11 from Homo sapiens (Human).